The sequence spans 374 residues: Polar flagellin E (374 aa).

Residues 102 to 126 (SHEQDDRKSLQQEVIALQDELDRVA) are a coiled coil.

It belongs to the bacterial flagellin family. Heteromer of multiple flagellin subunits including FlaA, FlaB/D, FlaC, FlaE and FlaF.

The protein localises to the secreted. It localises to the bacterial flagellum. In terms of biological role, flagellin is the subunit protein which polymerizes to form the filaments of bacterial flagella. In Vibrio parahaemolyticus serotype O3:K6 (strain RIMD 2210633), this protein is Polar flagellin E (flaE).